The chain runs to 78 residues: U7-lycotoxin-Ls1a (78 aa).

Positions 1–22 are cleaved as a signal peptide; that stretch reads MKLIIFTGLALLLIVSLIDVEA. Residues 23 to 26 constitute a propeptide that is removed on maturation; that stretch reads QNEG.

This sequence belongs to the neurotoxin 19 (CSTX) family. 07 (U7-Lctx) subfamily. Contains 4 disulfide bonds. In terms of tissue distribution, expressed by the venom gland.

It localises to the secreted. The chain is U7-lycotoxin-Ls1a from Lycosa singoriensis (Wolf spider).